Consider the following 1132-residue polypeptide: APC membrane recruitment protein 1 (1132 aa).

Met-1 is subject to N-acetylmethionine. A compositionally biased stretch (polar residues) spans 1-21 (MESQQDEAVQTKGASTSSDAQ). 8 disordered regions span residues 1–256 (MESQ…ACKN), 268–301 (FMQPKPVLEGGSLEEPHTSETEGKVVAGEVNPPN), 338–423 (SMTD…GEEN), 469–505 (GLGELLTPQSDQQESAPNSDEGYYDSTTPGFEDDSGE), 674–699 (TSGGSQTSHRGTTSAFPATSSSEPDW), 736–770 (MQEANFGGSPRKAYPSYSPPEEPEEEEEEKEGNAT), 924–949 (ELQAHQEDSDEEGEEEEGEWGRDSPL), and 1038–1132 (SQAS…NLAK). Basic and acidic residues predominate over residues 24–35 (GAEKGAKNKTTE). Positions 121-133 (SKSSAQFPSSQSA) are enriched in low complexity. Composition is skewed to basic and acidic residues over residues 195 to 208 (KELEGARTRSHEHV), 218 to 229 (EIFRDTRKENAK), and 281 to 290 (EEPHTSETEG). Residues 372-423 (ALPDDDDNDDEEEEEEEEEEEEEEEEEEEEEEEEEEEELLEDEEEVKDGEEN) show a composition bias toward acidic residues. Polar residues-rich tracts occupy residues 475–486 (TPQSDQQESAPN) and 677–696 (GSQTSHRGTTSAFPATSSSE). 2 stretches are compositionally biased toward acidic residues: residues 756 to 765 (EEPEEEEEEK) and 931 to 941 (DSDEEGEEEEG). 2 stretches are compositionally biased toward polar residues: residues 1059-1072 (SCSSISGANSQSQA) and 1115-1132 (ASLSTSYSSTAMNGNLAK).

Belongs to the Amer family. Interacts with CTNNB1, AXIN1, LRP6, KEAP1, APC and BTRC. Interacts with SCF (SKP1-CUL1-F-box protein) E3 ubiquitin-protein ligase complexes containing BTRC and/or FBXW11. Identified in the beta-catenin destruction complex containing CTNNB1, APC, AXIN1 and AXIN2. Interacts with WT1. As to expression, expressed in kidney.

The protein resides in the cytoplasm. Its subcellular location is the cell membrane. The protein localises to the nucleus. In terms of biological role, regulator of the canonical Wnt signaling pathway. Acts by specifically binding phosphatidylinositol 4,5-bisphosphate (PtdIns(4,5)P2), translocating to the cell membrane and interacting with key regulators of the canonical Wnt signaling pathway, such as components of the beta-catenin destruction complex. Acts both as a positive and negative regulator of the Wnt signaling pathway, depending on the context: acts as a positive regulator by promoting LRP6 phosphorylation. Also acts as a negative regulator by acting as a scaffold protein for the beta-catenin destruction complex and promoting stabilization of Axin at the cell membrane. Promotes CTNNB1 ubiquitination and degradation. Involved in kidney development. This chain is APC membrane recruitment protein 1 (Amer1), found in Mus musculus (Mouse).